Here is a 912-residue protein sequence, read N- to C-terminus: Nitrate reductase [NADH] (912 aa).

The interval 1–99 is disordered; sequence SVEPRQPFGR…PRDEGTADAW (99 aa). A compositionally biased stretch (low complexity) spans 13–23; sequence APATAPTARAP. Residues 54–68 show a composition bias toward acidic residues; that stretch reads AEEDEEDDDEDDEGH. Basic and acidic residues predominate over residues 85–94; that stretch reads PSTRDPRDEG. Residue cysteine 186 coordinates Mo-molybdopterin. The Cytochrome b5 heme-binding domain occupies 535-610; it reads DKQFTMSEVR…LDTYRIGELI (76 aa). Heme-binding residues include histidine 570 and histidine 593. One can recognise an FAD-binding FR-type domain in the interval 651–764; it reads REKVPCRLVD…KGPLGHVEYT (114 aa). Residues 703–706, 720–724, phenylalanine 725, phenylalanine 732, 737–739, serine 788, and threonine 791 contribute to the FAD site; these read RAYT, LVKVY, and LMT.

Belongs to the nitrate reductase family. Homodimer. FAD is required as a cofactor. Requires heme as cofactor. The cofactor is Mo-molybdopterin.

The catalysed reaction is nitrite + NAD(+) + H2O = nitrate + NADH + H(+). Its function is as follows. Nitrate reductase is a key enzyme involved in the first step of nitrate assimilation in plants, fungi and bacteria. The sequence is that of Nitrate reductase [NADH] from Hordeum vulgare (Barley).